Reading from the N-terminus, the 443-residue chain is Phosphoglucosamine mutase (443 aa).

S101 serves as the catalytic Phosphoserine intermediate. The Mg(2+) site is built by S101, D239, D241, and D243. Residue S101 is modified to Phosphoserine.

This sequence belongs to the phosphohexose mutase family. Mg(2+) serves as cofactor. Post-translationally, activated by phosphorylation.

The enzyme catalyses alpha-D-glucosamine 1-phosphate = D-glucosamine 6-phosphate. Catalyzes the conversion of glucosamine-6-phosphate to glucosamine-1-phosphate. In Francisella tularensis subsp. novicida (strain U112), this protein is Phosphoglucosamine mutase.